The chain runs to 585 residues: Clathrin heavy chain linker domain-containing protein 1 (585 aa).

Residues 118–239 are a coiled coil; it reads QLEAKMRIID…DLRFRHQRLQ (122 aa).

In Rattus norvegicus (Rat), this protein is Clathrin heavy chain linker domain-containing protein 1 (Clhc1).